The primary structure comprises 450 residues: LanC-like protein 2 (450 aa).

Residue G2 is the site of N-myristoyl glycine attachment. The segment at 2–15 (GETMSKRLKLHLGG) is interaction with inositol phospholipids. Y198 bears the Phosphotyrosine mark.

The protein belongs to the LanC-like protein family. Interacts with an array of inositol phospholipids such as phosphatidylinositol 3-phosphate (PI3P), phosphatidylinositol 4-phosphate (PI4P) and phosphatidylinositol 5-phosphate (PI5P). PIP-binding enhances membrane association. Myristoylated. Essential for membrane association. As to expression, expressed in brain and testis.

Its subcellular location is the nucleus. The protein localises to the cytoplasm. It is found in the cell membrane. In terms of biological role, necessary for abscisic acid (ABA) binding on the cell membrane and activation of the ABA signaling pathway in granulocytes. The polypeptide is LanC-like protein 2 (LANCL2) (Homo sapiens (Human)).